Here is a 78-residue protein sequence, read N- to C-terminus: Large ribosomal subunit protein uL29 (78 aa).

It belongs to the universal ribosomal protein uL29 family.

This chain is Large ribosomal subunit protein uL29, found in Rhodococcus opacus (strain B4).